We begin with the raw amino-acid sequence, 399 residues long: Bifunctional enzyme IspD/IspF (399 aa).

Residues 1-239 (MHTWALLLAA…SSEKKNMQVP (239 aa)) form a 2-C-methyl-D-erythritol 4-phosphate cytidylyltransferase region. The segment at 240–399 (CVGWGYDVHR…AVTALRRVSS (160 aa)) is 2-C-methyl-D-erythritol 2,4-cyclodiphosphate synthase. Residues Asp-246 and His-248 each contribute to the a divalent metal cation site. Residues 246–248 (DVH) and 273–274 (HS) each bind 4-CDP-2-C-methyl-D-erythritol 2-phosphate. An a divalent metal cation-binding site is contributed by His-281. 4-CDP-2-C-methyl-D-erythritol 2-phosphate is bound by residues 295-297 (DIG), 300-304 (FPDTD), 371-374 (TTEE), and Phe-378.

It in the N-terminal section; belongs to the IspD/TarI cytidylyltransferase family. IspD subfamily. In the C-terminal section; belongs to the IspF family. The cofactor is a divalent metal cation.

The catalysed reaction is 2-C-methyl-D-erythritol 4-phosphate + CTP + H(+) = 4-CDP-2-C-methyl-D-erythritol + diphosphate. It carries out the reaction 4-CDP-2-C-methyl-D-erythritol 2-phosphate = 2-C-methyl-D-erythritol 2,4-cyclic diphosphate + CMP. The protein operates within isoprenoid biosynthesis; isopentenyl diphosphate biosynthesis via DXP pathway; isopentenyl diphosphate from 1-deoxy-D-xylulose 5-phosphate: step 2/6. It functions in the pathway isoprenoid biosynthesis; isopentenyl diphosphate biosynthesis via DXP pathway; isopentenyl diphosphate from 1-deoxy-D-xylulose 5-phosphate: step 4/6. Bifunctional enzyme that catalyzes the formation of 4-diphosphocytidyl-2-C-methyl-D-erythritol from CTP and 2-C-methyl-D-erythritol 4-phosphate (MEP) (IspD), and catalyzes the conversion of 4-diphosphocytidyl-2-C-methyl-D-erythritol 2-phosphate (CDP-ME2P) to 2-C-methyl-D-erythritol 2,4-cyclodiphosphate (ME-CPP) with a corresponding release of cytidine 5-monophosphate (CMP) (IspF). This is Bifunctional enzyme IspD/IspF from Oleidesulfovibrio alaskensis (strain ATCC BAA-1058 / DSM 17464 / G20) (Desulfovibrio alaskensis).